The following is a 128-amino-acid chain: Large ribosomal subunit protein bL12 (128 aa).

Belongs to the bacterial ribosomal protein bL12 family. In terms of assembly, homodimer. Part of the ribosomal stalk of the 50S ribosomal subunit. Forms a multimeric L10(L12)X complex, where L10 forms an elongated spine to which 2 to 4 L12 dimers bind in a sequential fashion. Binds GTP-bound translation factors.

Forms part of the ribosomal stalk which helps the ribosome interact with GTP-bound translation factors. Is thus essential for accurate translation. This Methylobacillus flagellatus (strain ATCC 51484 / DSM 6875 / VKM B-1610 / KT) protein is Large ribosomal subunit protein bL12.